The primary structure comprises 528 residues: Lanosterol 14-alpha demethylase (528 aa).

The chain crosses the membrane as a helical span at residues 15–37 (LSLSVTQQISILLGVPFVYNLVW). Tyr64 lines the oteseconazole pocket. Itraconazole is bound at residue Tyr118. Position 307 (Gly307) interacts with posaconazole. His377 lines the oteseconazole pocket. Cys470 lines the heme pocket.

It belongs to the cytochrome P450 family. It depends on heme as a cofactor.

Its subcellular location is the endoplasmic reticulum membrane. The catalysed reaction is a 14alpha-methyl steroid + 3 reduced [NADPH--hemoprotein reductase] + 3 O2 = a Delta(14) steroid + formate + 3 oxidized [NADPH--hemoprotein reductase] + 4 H2O + 4 H(+). The enzyme catalyses a 14alpha-methyl steroid + reduced [NADPH--hemoprotein reductase] + O2 = a 14alpha-hydroxymethyl steroid + oxidized [NADPH--hemoprotein reductase] + H2O + H(+). It carries out the reaction a 14alpha-hydroxymethyl steroid + reduced [NADPH--hemoprotein reductase] + O2 = a 14alpha-formyl steroid + oxidized [NADPH--hemoprotein reductase] + 2 H2O + H(+). It catalyses the reaction a 14alpha-formyl steroid + reduced [NADPH--hemoprotein reductase] + O2 = a Delta(14) steroid + formate + oxidized [NADPH--hemoprotein reductase] + H2O + 2 H(+). The catalysed reaction is lanosterol + 3 reduced [NADPH--hemoprotein reductase] + 3 O2 = 4,4-dimethyl-5alpha-cholesta-8,14,24-trien-3beta-ol + formate + 3 oxidized [NADPH--hemoprotein reductase] + 4 H2O + 4 H(+). The enzyme catalyses lanosterol + reduced [NADPH--hemoprotein reductase] + O2 = 32-hydroxylanosterol + oxidized [NADPH--hemoprotein reductase] + H2O + H(+). It carries out the reaction 32-hydroxylanosterol + reduced [NADPH--hemoprotein reductase] + O2 = 32-oxolanosterol + oxidized [NADPH--hemoprotein reductase] + 2 H2O + H(+). It catalyses the reaction 32-oxolanosterol + reduced [NADPH--hemoprotein reductase] + O2 = 4,4-dimethyl-5alpha-cholesta-8,14,24-trien-3beta-ol + formate + oxidized [NADPH--hemoprotein reductase] + H2O + 2 H(+). The catalysed reaction is eburicol + 3 reduced [NADPH--hemoprotein reductase] + 3 O2 = 14-demethyleburicol + formate + 3 oxidized [NADPH--hemoprotein reductase] + 4 H2O + 4 H(+). The enzyme catalyses eburicol + reduced [NADPH--hemoprotein reductase] + O2 = 32-hydroxyeburicol + oxidized [NADPH--hemoprotein reductase] + H2O + H(+). It carries out the reaction 32-hydroxyeburicol + reduced [NADPH--hemoprotein reductase] + O2 = 32-oxoeburicol + oxidized [NADPH--hemoprotein reductase] + 2 H2O + H(+). It catalyses the reaction 32-oxoeburicol + reduced [NADPH--hemoprotein reductase] + O2 = 14-demethyleburicol + formate + oxidized [NADPH--hemoprotein reductase] + H2O + 2 H(+). It participates in steroid biosynthesis; zymosterol biosynthesis; zymosterol from lanosterol: step 1/6. Its activity is regulated as follows. The catalytic activity is inhibited by the binding of azoles clotrimazole, miconazole, fluconazole, ketoconazole, oteseconazole (VT-1161), tetraconazole, the triazole SCH39304, and the triazole derivative ICI 153066. Sterol 14alpha-demethylase that plays a critical role in the third module of ergosterol biosynthesis pathway, being ergosterol the major sterol component in fungal membranes that participates in a variety of functions. The third module or late pathway involves the ergosterol synthesis itself through consecutive reactions that mainly occur in the endoplasmic reticulum (ER) membrane. In filamentous fungi, during the initial step of this module, lanosterol (lanosta-8,24-dien-3beta-ol) can be metabolized to eburicol. Sterol 14alpha-demethylase catalyzes the three-step oxidative removal of the 14alpha-methyl group (C-32) of both these sterols in the form of formate, and converts eburicol and lanosterol to 14-demethyleburicol (4,4,24-trimethylergosta-8,14,24(28)-trienol) and 4,4-dimethyl-5alpha-cholesta-8,14,24-trien-3beta-ol, respectively, which are further metabolized by other enzymes in the pathway to ergosterol. Can also use substrates not intrinsic to fungi, such as 24,25-dihydrolanosterol (DHL), producing 4,4-dimethyl-8,14-cholestadien-3-beta-ol, but at lower rates than the endogenous substrates. This Candida albicans (strain SC5314 / ATCC MYA-2876) (Yeast) protein is Lanosterol 14-alpha demethylase.